Consider the following 217-residue polypeptide: Thiamine-phosphate synthase (217 aa).

4-amino-2-methyl-5-(diphosphooxymethyl)pyrimidine-binding positions include Q39–K43 and N71. 2 residues coordinate Mg(2+): D72 and D91. Position 110 (S110) interacts with 4-amino-2-methyl-5-(diphosphooxymethyl)pyrimidine. A 2-[(2R,5Z)-2-carboxy-4-methylthiazol-5(2H)-ylidene]ethyl phosphate-binding site is contributed by S137 to T139. K140 serves as a coordination point for 4-amino-2-methyl-5-(diphosphooxymethyl)pyrimidine. 2-[(2R,5Z)-2-carboxy-4-methylthiazol-5(2H)-ylidene]ethyl phosphate is bound by residues G173 and I193–S194.

This sequence belongs to the thiamine-phosphate synthase family. It depends on Mg(2+) as a cofactor.

The enzyme catalyses 2-[(2R,5Z)-2-carboxy-4-methylthiazol-5(2H)-ylidene]ethyl phosphate + 4-amino-2-methyl-5-(diphosphooxymethyl)pyrimidine + 2 H(+) = thiamine phosphate + CO2 + diphosphate. It carries out the reaction 2-(2-carboxy-4-methylthiazol-5-yl)ethyl phosphate + 4-amino-2-methyl-5-(diphosphooxymethyl)pyrimidine + 2 H(+) = thiamine phosphate + CO2 + diphosphate. It catalyses the reaction 4-methyl-5-(2-phosphooxyethyl)-thiazole + 4-amino-2-methyl-5-(diphosphooxymethyl)pyrimidine + H(+) = thiamine phosphate + diphosphate. Its pathway is cofactor biosynthesis; thiamine diphosphate biosynthesis; thiamine phosphate from 4-amino-2-methyl-5-diphosphomethylpyrimidine and 4-methyl-5-(2-phosphoethyl)-thiazole: step 1/1. Its function is as follows. Condenses 4-methyl-5-(beta-hydroxyethyl)thiazole monophosphate (THZ-P) and 2-methyl-4-amino-5-hydroxymethyl pyrimidine pyrophosphate (HMP-PP) to form thiamine monophosphate (TMP). In Bordetella parapertussis (strain 12822 / ATCC BAA-587 / NCTC 13253), this protein is Thiamine-phosphate synthase.